The following is a 177-amino-acid chain: Acireductone dioxygenase (177 aa).

The disordered stretch occupies residues 1 to 23 (MVRAWYMDDSDADQRAPHMTDPP). 4 residues coordinate Fe(2+): histidine 86, histidine 88, glutamate 92, and histidine 131. Residues histidine 86, histidine 88, glutamate 92, and histidine 131 each coordinate Ni(2+).

The protein belongs to the acireductone dioxygenase (ARD) family. It depends on Fe(2+) as a cofactor. Ni(2+) is required as a cofactor.

It localises to the cytoplasm. Its subcellular location is the nucleus. It carries out the reaction 1,2-dihydroxy-5-(methylsulfanyl)pent-1-en-3-one + O2 = 4-methylsulfanyl-2-oxobutanoate + formate + 2 H(+). It catalyses the reaction 1,2-dihydroxy-5-(methylsulfanyl)pent-1-en-3-one + O2 = 3-(methylsulfanyl)propanoate + CO + formate + 2 H(+). Its pathway is amino-acid biosynthesis; L-methionine biosynthesis via salvage pathway; L-methionine from S-methyl-5-thio-alpha-D-ribose 1-phosphate: step 5/6. Its function is as follows. Catalyzes 2 different reactions between oxygen and the acireductone 1,2-dihydroxy-3-keto-5-methylthiopentene (DHK-MTPene) depending upon the metal bound in the active site. Fe-containing acireductone dioxygenase (Fe-ARD) produces formate and 2-keto-4-methylthiobutyrate (KMTB), the alpha-ketoacid precursor of methionine in the methionine recycle pathway. Ni-containing acireductone dioxygenase (Ni-ARD) produces methylthiopropionate, carbon monoxide and formate, and does not lie on the methionine recycle pathway. In Branchiostoma floridae (Florida lancelet), this protein is Acireductone dioxygenase.